Consider the following 252-residue polypeptide: Uracil-DNA glycosylase (252 aa).

Residue aspartate 78 is the Proton acceptor of the active site.

The protein belongs to the uracil-DNA glycosylase (UDG) superfamily. UNG family.

The protein resides in the cytoplasm. It catalyses the reaction Hydrolyzes single-stranded DNA or mismatched double-stranded DNA and polynucleotides, releasing free uracil.. Functionally, excises uracil residues from the DNA which can arise as a result of misincorporation of dUMP residues by DNA polymerase or due to deamination of cytosine. The chain is Uracil-DNA glycosylase from Bordetella avium (strain 197N).